The sequence spans 496 residues: Maturase K (496 aa).

The protein belongs to the intron maturase 2 family. MatK subfamily.

It is found in the plastid. The protein resides in the chloroplast. Usually encoded in the trnK tRNA gene intron. Probably assists in splicing its own and other chloroplast group II introns. The sequence is that of Maturase K from Paeonia officinalis (Common peony).